The primary structure comprises 313 residues: tRNA dimethylallyltransferase (313 aa).

Residue 11–18 (GPTACGKT) participates in ATP binding. 13-18 (TACGKT) contacts substrate. 3 interaction with substrate tRNA regions span residues 36-39 (DSAL), 160-164 (QRIER), and 243-248 (RCVGYR).

It belongs to the IPP transferase family. In terms of assembly, monomer. Mg(2+) serves as cofactor.

It carries out the reaction adenosine(37) in tRNA + dimethylallyl diphosphate = N(6)-dimethylallyladenosine(37) in tRNA + diphosphate. Its function is as follows. Catalyzes the transfer of a dimethylallyl group onto the adenine at position 37 in tRNAs that read codons beginning with uridine, leading to the formation of N6-(dimethylallyl)adenosine (i(6)A). The protein is tRNA dimethylallyltransferase of Neisseria meningitidis serogroup C (strain 053442).